A 508-amino-acid polypeptide reads, in one-letter code: Protein phosphatase PP2A regulatory subunit B (508 aa).

6 WD repeats span residues 19 to 58 (TEADIISTVEFDHTGDFLATGDKGGRVVLFERNQSKKKQS), 81 to 122 (EIEE…IKLV), 166 to 204 (AHAYHINSISVNSDQETYLSADDLRINLWNLGIADQSFN), 215 to 255 (ELTE…LCDS), 274 to 312 (EITSSISDVKFSHDGRYIASRDYMTVKIWDLAMENKPIK), and 329 to 370 (ENDA…GNDD). Positions 369–466 (DDKPKFKSAF…MRRRMTSGVG (98 aa)) are disordered. Residues 396–418 (DDDDDDDDDDDDEEADDEFDEEV) are compositionally biased toward acidic residues. Over residues 447 to 461 (FKSKKSGQHPMRRRM) the composition is skewed to basic residues. The stretch at 477-507 (DFKKSILHLSWHPRENSVAIAATNNLYIFST) is one WD 7 repeat.

The protein belongs to the phosphatase 2A regulatory subunit B family. PP2A exists in several trimeric forms, all of which consist of a core composed of a catalytic subunit associated with a 65 kDa (PR65) (Subunit A) and a 55 kDa (PR55) (Subunit B) regulatory subunit.

Functionally, phosphatase 2A affects a variety of biological processes in the cell such as transcription, cell cycle progression and cellular morphogenesis, and provides an initial identification of critical substrates for this phosphatase. The regulatory subunit may direct the catalytic subunit to distinct, albeit overlapping, subsets of substrates. The chain is Protein phosphatase PP2A regulatory subunit B (CDC55) from Candida tropicalis (Yeast).